Here is a 155-residue protein sequence, read N- to C-terminus: 6,7-dimethyl-8-ribityllumazine synthase (155 aa).

5-amino-6-(D-ribitylamino)uracil is bound by residues Phe23, Ala57–Glu59, and Ala81–Ile83. Ser86 to Thr87 lines the (2S)-2-hydroxy-3-oxobutyl phosphate pocket. The active-site Proton donor is His89. Phe114 is a binding site for 5-amino-6-(D-ribitylamino)uracil. Arg128 is a (2S)-2-hydroxy-3-oxobutyl phosphate binding site.

The protein belongs to the DMRL synthase family.

It catalyses the reaction (2S)-2-hydroxy-3-oxobutyl phosphate + 5-amino-6-(D-ribitylamino)uracil = 6,7-dimethyl-8-(1-D-ribityl)lumazine + phosphate + 2 H2O + H(+). It functions in the pathway cofactor biosynthesis; riboflavin biosynthesis; riboflavin from 2-hydroxy-3-oxobutyl phosphate and 5-amino-6-(D-ribitylamino)uracil: step 1/2. Its function is as follows. Catalyzes the formation of 6,7-dimethyl-8-ribityllumazine by condensation of 5-amino-6-(D-ribitylamino)uracil with 3,4-dihydroxy-2-butanone 4-phosphate. This is the penultimate step in the biosynthesis of riboflavin. In Geobacter sulfurreducens (strain ATCC 51573 / DSM 12127 / PCA), this protein is 6,7-dimethyl-8-ribityllumazine synthase.